Reading from the N-terminus, the 214-residue chain is Octanoyltransferase (214 aa).

The BPL/LPL catalytic domain maps to lysine 31–tyrosine 206. Residues arginine 70–histidine 77, serine 137–glycine 139, and glycine 150–alanine 152 contribute to the substrate site. The Acyl-thioester intermediate role is filled by cysteine 168.

Belongs to the LipB family.

Its subcellular location is the cytoplasm. It catalyses the reaction octanoyl-[ACP] + L-lysyl-[protein] = N(6)-octanoyl-L-lysyl-[protein] + holo-[ACP] + H(+). It participates in protein modification; protein lipoylation via endogenous pathway; protein N(6)-(lipoyl)lysine from octanoyl-[acyl-carrier-protein]: step 1/2. Its function is as follows. Catalyzes the transfer of endogenously produced octanoic acid from octanoyl-acyl-carrier-protein onto the lipoyl domains of lipoate-dependent enzymes. Lipoyl-ACP can also act as a substrate although octanoyl-ACP is likely to be the physiological substrate. This Marinomonas sp. (strain MWYL1) protein is Octanoyltransferase.